We begin with the raw amino-acid sequence, 89 residues long: Small ribosomal subunit protein uS15 (89 aa).

It belongs to the universal ribosomal protein uS15 family. As to quaternary structure, part of the 30S ribosomal subunit. Forms a bridge to the 50S subunit in the 70S ribosome, contacting the 23S rRNA.

One of the primary rRNA binding proteins, it binds directly to 16S rRNA where it helps nucleate assembly of the platform of the 30S subunit by binding and bridging several RNA helices of the 16S rRNA. In terms of biological role, forms an intersubunit bridge (bridge B4) with the 23S rRNA of the 50S subunit in the ribosome. The chain is Small ribosomal subunit protein uS15 from Pseudomonas putida (Arthrobacter siderocapsulatus).